The chain runs to 235 residues: Glucosamine-6-phosphate deaminase (235 aa).

Asp62 serves as the catalytic Proton acceptor; for enolization step. Asn128 functions as the For ring-opening step in the catalytic mechanism. His130 functions as the Proton acceptor; for ring-opening step in the catalytic mechanism. Residue Glu135 is the For ring-opening step of the active site.

This sequence belongs to the glucosamine/galactosamine-6-phosphate isomerase family. NagB subfamily.

The catalysed reaction is alpha-D-glucosamine 6-phosphate + H2O = beta-D-fructose 6-phosphate + NH4(+). The protein operates within amino-sugar metabolism; N-acetylneuraminate degradation; D-fructose 6-phosphate from N-acetylneuraminate: step 5/5. Catalyzes the reversible isomerization-deamination of glucosamine 6-phosphate (GlcN6P) to form fructose 6-phosphate (Fru6P) and ammonium ion. The polypeptide is Glucosamine-6-phosphate deaminase (Streptococcus gordonii (strain Challis / ATCC 35105 / BCRC 15272 / CH1 / DL1 / V288)).